We begin with the raw amino-acid sequence, 745 residues long: Capsid protein (745 aa).

3 disordered regions span residues 23–44 (RRPLRRRRAGRPARRYRRRRTV), 598–619 (PCKTDGRPTDSDRHPRGIQVAD), and 660–700 (QPKR…EQAT). Composition is skewed to basic and acidic residues over residues 599–612 (CKTDGRPTDSDRHP) and 675–691 (GEFREPEKGSYSEEERS).

Belongs to the anelloviridae capsid protein family.

The protein resides in the virion. Its function is as follows. Self assemble to form an icosahedral capsid. This Homo sapiens (Human) protein is Capsid protein.